The primary structure comprises 513 residues: Arabinoxylan arabinofuranohydrolase (513 aa).

Positions 1–26 (MRKKCSVCLWILVLLLSCLSGKSAYA) are cleaved as a signal peptide. Aspartate 50 (proton acceptor) is an active-site residue. Glutamate 251 functions as the Proton donor in the catalytic mechanism. Asparagine 314 serves as a coordination point for substrate. The CBM6 domain maps to 382-511 (NRVEAETFAW…LFNFDYWQFT (130 aa)). Ca(2+)-binding residues include glutamate 385, glutamate 387, asparagine 409, glutamine 410, and aspartate 506.

It is found in the secreted. It catalyses the reaction Hydrolysis of terminal non-reducing alpha-L-arabinofuranoside residues in alpha-L-arabinosides.. It participates in glycan degradation; xylan degradation. In terms of biological role, cleaves arabinose units from O-2- or O-3-monosubstituted xylose residues, thereby assisting in arabinoxylan (AX) and short-chain arabinoxylo-oligosaccharide (AXOS) degradation. Is more active on wheat bran AXOS than on wheat water-extractable AX and rye water-extractable AX. Does not display endoxylanase, xylosidase or arabinanase activity. The polypeptide is Arabinoxylan arabinofuranohydrolase (xynD) (Bacillus subtilis (strain 168)).